We begin with the raw amino-acid sequence, 275 residues long: Large ribosomal subunit protein uL2c (275 aa).

The tract at residues 28–53 (TPTKSLTHANHRARGRNHSGSITTRW) is disordered.

The protein belongs to the universal ribosomal protein uL2 family. As to quaternary structure, part of the 50S ribosomal subunit.

The protein localises to the plastid. The protein resides in the chloroplast. The protein is Large ribosomal subunit protein uL2c (rpl2) of Nephroselmis olivacea (Green alga).